Consider the following 363-residue polypeptide: UDP-N-acetylglucosamine--N-acetylmuramyl-(pentapeptide) pyrophosphoryl-undecaprenol N-acetylglucosamine transferase (363 aa).

UDP-N-acetyl-alpha-D-glucosamine is bound by residues 14–16, Asn-122, Arg-163, Ser-190, and Gln-285; that span reads TGG.

It belongs to the glycosyltransferase 28 family. MurG subfamily.

Its subcellular location is the cell inner membrane. The catalysed reaction is di-trans,octa-cis-undecaprenyl diphospho-N-acetyl-alpha-D-muramoyl-L-alanyl-D-glutamyl-meso-2,6-diaminopimeloyl-D-alanyl-D-alanine + UDP-N-acetyl-alpha-D-glucosamine = di-trans,octa-cis-undecaprenyl diphospho-[N-acetyl-alpha-D-glucosaminyl-(1-&gt;4)]-N-acetyl-alpha-D-muramoyl-L-alanyl-D-glutamyl-meso-2,6-diaminopimeloyl-D-alanyl-D-alanine + UDP + H(+). It functions in the pathway cell wall biogenesis; peptidoglycan biosynthesis. Its function is as follows. Cell wall formation. Catalyzes the transfer of a GlcNAc subunit on undecaprenyl-pyrophosphoryl-MurNAc-pentapeptide (lipid intermediate I) to form undecaprenyl-pyrophosphoryl-MurNAc-(pentapeptide)GlcNAc (lipid intermediate II). The protein is UDP-N-acetylglucosamine--N-acetylmuramyl-(pentapeptide) pyrophosphoryl-undecaprenol N-acetylglucosamine transferase of Prochlorococcus marinus (strain MIT 9312).